Here is an 881-residue protein sequence, read N- to C-terminus: Ent-kaurene synthase CPS/KS, chloroplastic (881 aa).

The N-terminal 41 residues, 1 to 41 (MASSTLIQNRSCGVTSSMSSFQIFRGQPLRFPGTRTPAAVQ), are a transit peptide targeting the chloroplast. Positions 417, 419, 635, 639, 778, 779, and 786 each coordinate Mg(2+). Positions 417 to 422 (DVDDTA) match the DXDDTA motif motif. The DDXXD motif motif lies at 635 to 639 (DDYFD).

The protein belongs to the terpene synthase family. The cofactor is Mg(2+).

It is found in the plastid. The protein localises to the chloroplast. It carries out the reaction (2E,6E,10E)-geranylgeranyl diphosphate = ent-copalyl diphosphate. It catalyses the reaction ent-copalyl diphosphate = ent-kaur-16-ene + diphosphate. The catalysed reaction is ent-copalyl diphosphate = ent-beyerene + diphosphate. The enzyme catalyses ent-copalyl diphosphate = ent-sandaracopimara-8(14),15-diene + diphosphate. It carries out the reaction ent-copalyl diphosphate = ent-isokaurene + diphosphate. It catalyses the reaction ent-copalyl diphosphate + H2O = 16alpha-hydroxy-ent-kaurene + diphosphate. The protein operates within secondary metabolite biosynthesis; terpenoid biosynthesis. Functionally, bifunctional copalyl diphosphate/kaurene synthase involved in the biosynthesis of labdane-related diterpenoids (LRDs) natural products such as ent-beyerene, an antimicrobial compound. Supports the conversion of geranylgeranyl diphosphate (GGPP) to ent-copalyl diphosphate (ent-CDP). Also catalyzes the subsequent cyclization of ent-CDP into many diterpenes, including ent-kaur-16-ene as the major product, and ent-beyerene, ent-sandaracopimaradiene, ent-kaur-15-ene (ent-isokaurene) and 16-hydroxy-ent-kaurene (ent-16-alpha-hydroxy-kaurene) as minor products. The chain is Ent-kaurene synthase CPS/KS, chloroplastic from Physcomitrium patens (Spreading-leaved earth moss).